We begin with the raw amino-acid sequence, 306 residues long: Elongation factor Ts (306 aa).

The interval Thr80–Val83 is involved in Mg(2+) ion dislocation from EF-Tu.

This sequence belongs to the EF-Ts family.

It localises to the cytoplasm. Its function is as follows. Associates with the EF-Tu.GDP complex and induces the exchange of GDP to GTP. It remains bound to the aminoacyl-tRNA.EF-Tu.GTP complex up to the GTP hydrolysis stage on the ribosome. The chain is Elongation factor Ts from Leptothrix cholodnii (strain ATCC 51168 / LMG 8142 / SP-6) (Leptothrix discophora (strain SP-6)).